Reading from the N-terminus, the 263-residue chain is Peptidoglycan-N-acetylmuramic acid deacetylase PdaA (263 aa).

Residues 1–23 (MKWMCSICCAAVLLAGGAAQAEA) form the signal peptide. The NodB homology domain maps to 66–247 (KTIYLTFDNG…DLKKQGYTFK (182 aa)). Asp-73 acts as the Proton acceptor in catalysis. Residues His-124 and His-128 each coordinate a divalent metal cation. His-222 (proton donor) is an active-site residue.

This sequence belongs to the polysaccharide deacetylase family.

In terms of biological role, catalyzes the deacetylation of N-acetylmuramic acid (MurNAc) residues in glycan strands of peptidoglycan, leading to the formation of muramic delta-lactam residues in spore cortex, after transpeptidation of deacetylated muramic acid residues. PdaA probably carries out both deacetylation and lactam ring formation and requires the product of CwlD activity on peptidoglycan as a substrate. Is required for germination. Cannot use chitin oligomer (hexa-N-acetylchitohexaose) as a substrate. In Bacillus subtilis (strain 168), this protein is Peptidoglycan-N-acetylmuramic acid deacetylase PdaA (pdaA).